Here is a 370-residue protein sequence, read N- to C-terminus: uncharacterized protein (370 aa).

This is an uncharacterized protein from Acanthamoeba polyphaga (Amoeba).